The following is a 563-amino-acid chain: Inclusion body clearance protein IML2 (563 aa).

Belongs to the IML2 family. In terms of assembly, interacts with lipid droplet proteins.

It is found in the cytoplasm. Its subcellular location is the nucleus. Functionally, inclusion body (IB) resident protein that interacts strongly with lipid droplet (LD) proteins. Involved in LD-mediated IB clearing after protein folding stress, probably by enabling access to the IBs of an LD-stored soluble sterol derivative that acts as a chaperone in inclusion clearing. This is Inclusion body clearance protein IML2 from Schizosaccharomyces pombe (strain 972 / ATCC 24843) (Fission yeast).